Consider the following 317-residue polypeptide: Ribosomal large subunit pseudouridine synthase D (317 aa).

Residues 15–89 form the S4 RNA-binding domain; that stretch reads WRLDRALASL…IPLEIVFEDE (75 aa). The active site involves Asp141.

Belongs to the pseudouridine synthase RluA family.

Its subcellular location is the cytoplasm. The catalysed reaction is uridine(1911/1915/1917) in 23S rRNA = pseudouridine(1911/1915/1917) in 23S rRNA. Responsible for synthesis of pseudouridine from uracil at positions 1911, 1915 and 1917 in 23S ribosomal RNA. This chain is Ribosomal large subunit pseudouridine synthase D, found in Zymomonas mobilis subsp. mobilis (strain ATCC 31821 / ZM4 / CP4).